We begin with the raw amino-acid sequence, 248 residues long: Ribonuclease 3 (248 aa).

An RNase III domain is found at 16 to 145; the sequence is TEGLETSIGY…LLAAMYLDGG (130 aa). Glutamate 58 contributes to the Mg(2+) binding site. Residue aspartate 62 is part of the active site. Residues asparagine 131 and glutamate 134 each contribute to the Mg(2+) site. Glutamate 134 is an active-site residue. The DRBM domain maps to 172-241; sequence DFKTDFQELA…ARQCLERLET (70 aa).

This sequence belongs to the ribonuclease III family. As to quaternary structure, homodimer. It depends on Mg(2+) as a cofactor.

It localises to the cytoplasm. It catalyses the reaction Endonucleolytic cleavage to 5'-phosphomonoester.. Functionally, digests double-stranded RNA. Involved in the processing of primary rRNA transcript to yield the immediate precursors to the large and small rRNAs (23S and 16S). Processes some mRNAs, and tRNAs when they are encoded in the rRNA operon. Processes pre-crRNA and tracrRNA of type II CRISPR loci if present in the organism. This is Ribonuclease 3 from Geobacter sulfurreducens (strain ATCC 51573 / DSM 12127 / PCA).